A 169-amino-acid polypeptide reads, in one-letter code: MERAIFAGGCFWCMVQPFEEQAGILSVRSGYTGGHLPNPSYEQVCAKTTGHTEAVEIIFDPEEISYKELVELYWVQTDPTDAFGQFEDRGDNYRPVIYYTTERQKEIAEQSKANLQASGRFDQPIVTTIEPAEPFYLAEDYHQGFYKKNPRRYAQSSAIRHQFLEENWS.

Residue Cys-10 is part of the active site.

Belongs to the MsrA Met sulfoxide reductase family.

It catalyses the reaction L-methionyl-[protein] + [thioredoxin]-disulfide + H2O = L-methionyl-(S)-S-oxide-[protein] + [thioredoxin]-dithiol. The catalysed reaction is [thioredoxin]-disulfide + L-methionine + H2O = L-methionine (S)-S-oxide + [thioredoxin]-dithiol. In terms of biological role, has an important function as a repair enzyme for proteins that have been inactivated by oxidation. Catalyzes the reversible oxidation-reduction of methionine sulfoxide in proteins to methionine. This is Peptide methionine sulfoxide reductase MsrA from Streptococcus pyogenes serotype M28 (strain MGAS6180).